The chain runs to 660 residues: Bifunctional polymyxin resistance protein ArnA (660 aa).

Positions 1–304 (MKTVVFAYHD…TLGLVQGSRL (304 aa)) are formyltransferase ArnAFT. 86 to 88 (HLI) serves as a coordination point for (6R)-10-formyltetrahydrofolate. Residue His104 is the Proton donor; for formyltransferase activity of the active site. Residues Arg114 and 136 to 140 (VKRAD) contribute to the (6R)-10-formyltetrahydrofolate site. The interval 314-660 (RRTRVLILGV…RTVDLTDKPS (347 aa)) is dehydrogenase ArnADH. NAD(+) contacts are provided by residues Asp347 and 368–369 (DI). Residues Ala393, Tyr398, and 432 to 433 (TS) contribute to the UDP-alpha-D-glucuronate site. The active-site Proton acceptor; for decarboxylase activity is the Glu434. UDP-alpha-D-glucuronate-binding positions include Arg460, Asn492, 526–535 (KLIDGGKQKR), and Tyr613. Arg619 serves as the catalytic Proton donor; for decarboxylase activity.

It in the N-terminal section; belongs to the Fmt family. UDP-L-Ara4N formyltransferase subfamily. In the C-terminal section; belongs to the NAD(P)-dependent epimerase/dehydratase family. UDP-glucuronic acid decarboxylase subfamily. As to quaternary structure, homohexamer, formed by a dimer of trimers.

The catalysed reaction is UDP-alpha-D-glucuronate + NAD(+) = UDP-beta-L-threo-pentopyranos-4-ulose + CO2 + NADH. The enzyme catalyses UDP-4-amino-4-deoxy-beta-L-arabinose + (6R)-10-formyltetrahydrofolate = UDP-4-deoxy-4-formamido-beta-L-arabinose + (6S)-5,6,7,8-tetrahydrofolate + H(+). Its pathway is nucleotide-sugar biosynthesis; UDP-4-deoxy-4-formamido-beta-L-arabinose biosynthesis; UDP-4-deoxy-4-formamido-beta-L-arabinose from UDP-alpha-D-glucuronate: step 1/3. The protein operates within nucleotide-sugar biosynthesis; UDP-4-deoxy-4-formamido-beta-L-arabinose biosynthesis; UDP-4-deoxy-4-formamido-beta-L-arabinose from UDP-alpha-D-glucuronate: step 3/3. It functions in the pathway bacterial outer membrane biogenesis; lipopolysaccharide biosynthesis. Functionally, bifunctional enzyme that catalyzes the oxidative decarboxylation of UDP-glucuronic acid (UDP-GlcUA) to UDP-4-keto-arabinose (UDP-Ara4O) and the addition of a formyl group to UDP-4-amino-4-deoxy-L-arabinose (UDP-L-Ara4N) to form UDP-L-4-formamido-arabinose (UDP-L-Ara4FN). The modified arabinose is attached to lipid A and is required for resistance to polymyxin and cationic antimicrobial peptides. The protein is Bifunctional polymyxin resistance protein ArnA of Escherichia coli O6:H1 (strain CFT073 / ATCC 700928 / UPEC).